Here is a 380-residue protein sequence, read N- to C-terminus: Chaperone protein DnaJ (380 aa).

The region spanning 5-69 (DYYEILGVSK…QKRAHYDQFG (65 aa)) is the J domain. The CR-type zinc-finger motif lies at 135 to 217 (GKETDIEIPS…CGGTGRVKRR (83 aa)). 8 residues coordinate Zn(2+): Cys148, Cys151, Cys165, Cys168, Cys191, Cys194, Cys205, and Cys208. CXXCXGXG motif repeat units follow at residues 148-155 (CNTCHGTG), 165-172 (CPHCHGAG), 191-198 (CPYCGGTG), and 205-212 (CTTCGGTG).

This sequence belongs to the DnaJ family. As to quaternary structure, homodimer. Requires Zn(2+) as cofactor.

It is found in the cytoplasm. Its function is as follows. Participates actively in the response to hyperosmotic and heat shock by preventing the aggregation of stress-denatured proteins and by disaggregating proteins, also in an autonomous, DnaK-independent fashion. Unfolded proteins bind initially to DnaJ; upon interaction with the DnaJ-bound protein, DnaK hydrolyzes its bound ATP, resulting in the formation of a stable complex. GrpE releases ADP from DnaK; ATP binding to DnaK triggers the release of the substrate protein, thus completing the reaction cycle. Several rounds of ATP-dependent interactions between DnaJ, DnaK and GrpE are required for fully efficient folding. Also involved, together with DnaK and GrpE, in the DNA replication of plasmids through activation of initiation proteins. This Geobacillus stearothermophilus (Bacillus stearothermophilus) protein is Chaperone protein DnaJ.